Here is a 545-residue protein sequence, read N- to C-terminus: Baeyer-Villiger monooxygenase (545 aa).

Positions 24, 45, 54, 65, 71, and 118 each coordinate FAD.

The protein belongs to the FAD-binding monooxygenase family. Requires FAD as cofactor.

In terms of biological role, catalyzes a Baeyer-Villiger oxidation reaction, i.e. the insertion of an oxygen atom into a carbon-carbon bond adjacent to a carbonyl, which converts ketones to esters or lactones using NADPH as an electron donor. Besides cycloalkanones, can use cyclic alpha,beta-unsaturated ketones as substrates, leading to conjugated ene-lactones. Can also act on methylated cycloalkanones and methylated cycloalkenones with high enantioselectivity in some cases. The protein is Baeyer-Villiger monooxygenase of Pseudooceanicola batsensis (strain ATCC BAA-863 / DSM 15984 / KCTC 12145 / HTCC2597) (Oceanicola batsensis).